Here is a 617-residue protein sequence, read N- to C-terminus: Neopullulanase SusA (617 aa).

Positions 1–22 (MKRNLLFIILLLLLPGLHQVFA) are cleaved as a signal peptide. Ca(2+) contacts are provided by N138, N143, D144, G164, and D166. Residues D331 and E360 contribute to the active site.

This sequence belongs to the glycosyl hydrolase 13 family. It depends on Ca(2+) as a cofactor.

Its subcellular location is the periplasm. The catalysed reaction is Hydrolysis of pullulan to panose (6-alpha-D-glucosylmaltose).. Its pathway is glycan degradation; starch degradation. Neopullulanase that cleaves 1,4-alpha-glucosidic linkages in starch to produce disaccharides or trisaccharides in starch degradation. The sequence is that of Neopullulanase SusA (susA) from Bacteroides thetaiotaomicron (strain ATCC 29148 / DSM 2079 / JCM 5827 / CCUG 10774 / NCTC 10582 / VPI-5482 / E50).